Consider the following 151-residue polypeptide: Methylated-DNA--protein-cysteine methyltransferase (151 aa).

Residue cysteine 119 is the Nucleophile; methyl group acceptor of the active site.

This sequence belongs to the MGMT family.

It localises to the cytoplasm. It catalyses the reaction a 6-O-methyl-2'-deoxyguanosine in DNA + L-cysteinyl-[protein] = S-methyl-L-cysteinyl-[protein] + a 2'-deoxyguanosine in DNA. It carries out the reaction a 4-O-methyl-thymidine in DNA + L-cysteinyl-[protein] = a thymidine in DNA + S-methyl-L-cysteinyl-[protein]. Functionally, involved in the cellular defense against the biological effects of O6-methylguanine (O6-MeG) and O4-methylthymine (O4-MeT) in DNA. Repairs the methylated nucleobase in DNA by stoichiometrically transferring the methyl group to a cysteine residue in the enzyme. This is a suicide reaction: the enzyme is irreversibly inactivated. This is Methylated-DNA--protein-cysteine methyltransferase from Saccharolobus islandicus (strain L.S.2.15 / Lassen #1) (Sulfolobus islandicus).